A 911-amino-acid chain; its full sequence is Valine--tRNA ligase (911 aa).

Positions 57-67 (PTVSGSLHVGH) match the 'HIGH' region motif. The 'KMSKS' region motif lies at 599 to 603 (KMSKS). An ATP-binding site is contributed by lysine 602. The disordered stretch occupies residues 882–911 (EESAAEGTPETEVAVEASELGEPPAKKPKH).

Belongs to the class-I aminoacyl-tRNA synthetase family. ValS type 2 subfamily. Monomer.

It localises to the cytoplasm. The enzyme catalyses tRNA(Val) + L-valine + ATP = L-valyl-tRNA(Val) + AMP + diphosphate. Its function is as follows. Catalyzes the attachment of valine to tRNA(Val). As ValRS can inadvertently accommodate and process structurally similar amino acids such as threonine, to avoid such errors, it has a 'posttransfer' editing activity that hydrolyzes mischarged Thr-tRNA(Val) in a tRNA-dependent manner. In Bifidobacterium longum (strain NCC 2705), this protein is Valine--tRNA ligase.